Here is a 356-residue protein sequence, read N- to C-terminus: A-type ATP synthase subunit C (356 aa).

This sequence belongs to the V-ATPase V0D/AC39 subunit family. In terms of assembly, has multiple subunits with at least A(3), B(3), C, D, E, F, H, I and proteolipid K(x).

The protein resides in the cell membrane. Its function is as follows. Component of the A-type ATP synthase that produces ATP from ADP in the presence of a proton gradient across the membrane. The protein is A-type ATP synthase subunit C of Thermoplasma acidophilum (strain ATCC 25905 / DSM 1728 / JCM 9062 / NBRC 15155 / AMRC-C165).